The chain runs to 659 residues: Pro-secreted protein ORF2 (659 aa).

The signal sequence occupies residues 1–23 (MRPRPLLLLFLLFLPMLPAPPTG). 2 disordered regions span residues 19-43 (APPT…GFWG) and 64-107 (PDVA…TAGA). Residues 28-33 (RRRGRR) carry the Nuclear localization signal motif. Residues 92–107 (QRPSAASRRRPATAGA) are compositionally biased toward low complexity. N-linked (GlcNAc...) asparagine; by host glycosylation is found at asparagine 137 and asparagine 310. The interval 367–393 (IALTLLNLADTLLGGLPTELISSAGGQ) is particle formation. An N-linked (GlcNAc...) asparagine; by host glycan is attached at asparagine 561. An oligomerization region spans residues 584–609 (TTRLGAGPVAISAAAVLAPRSALALL).

This sequence belongs to the hepevirus capsid protein family. Homodimer. In terms of assembly, self-assembles to form the capsid. The capsid is dominated by dimers that define the 30 morphological units. Interacts with phosphorylated protein ORF3. Interacts with host TMEM134. Interacts with host ASGR1 and ASGR2; these interactions facilitate infection of host hepatocytes. Post-translationally, cleaved by host protease in the N-terminus. N-glycosylated. In terms of processing, not N-glycosylated. The C-terminus of the capsid protein ORF2 is truncated in non-enveloped virions shedded in feces, probably due to host proteases.

The protein resides in the secreted. Its subcellular location is the virion. It is found in the host cytoplasm. It localises to the host endoplasmic reticulum. The protein localises to the host Golgi apparatus. The protein resides in the host cell surface. Its subcellular location is the host nucleus. Its function is as follows. Plays a role in the inhibition of host antibody-mediated neutralization without blocking viral cell entry. Functionally, forms an icosahedral capsid with a T=1 symmetry and a 34 nm diameter. The capsid is composed of 60 copies linked to each other. Binds to the 5' end of the genomic RNA to mediate genome encapsidation. Binds to heparin surface proteoglycans (HSPGs) to mediate viral entry. Additionally, the interactions with host ASGR1 and ASGR2 facilitate viral infection of hepatocytes. Inhibits IFN production by blocking host TBK1-induced IRF3 phosphorylation. The nuclear form probably modulates host gene expression. In Bandicota bengalensis (lesser bandicoot rat), this protein is Pro-secreted protein ORF2.